The chain runs to 326 residues: N-acetyl-gamma-glutamyl-phosphate reductase (326 aa).

Cys-155 is a catalytic residue.

The protein belongs to the NAGSA dehydrogenase family. Type 1 subfamily.

Its subcellular location is the cytoplasm. The enzyme catalyses N-acetyl-L-glutamate 5-semialdehyde + phosphate + NADP(+) = N-acetyl-L-glutamyl 5-phosphate + NADPH + H(+). It participates in amino-acid biosynthesis; L-arginine biosynthesis; N(2)-acetyl-L-ornithine from L-glutamate: step 3/4. In terms of biological role, catalyzes the NADPH-dependent reduction of N-acetyl-5-glutamyl phosphate to yield N-acetyl-L-glutamate 5-semialdehyde. In Shewanella baltica (strain OS185), this protein is N-acetyl-gamma-glutamyl-phosphate reductase.